Here is a 398-residue protein sequence, read N- to C-terminus: Tyrosine--tRNA ligase (398 aa).

Positions 48-57 (PTGADIHLGH) match the 'HIGH' region motif. The 'KMSKS' region motif lies at 235–239 (KMSKS). Lys-238 serves as a coordination point for ATP. The region spanning 334 to 398 (VKLAYLLGAT…GKNKFVRLVL (65 aa)) is the S4 RNA-binding domain.

Belongs to the class-I aminoacyl-tRNA synthetase family. TyrS type 2 subfamily. As to quaternary structure, homodimer.

The protein resides in the cytoplasm. The enzyme catalyses tRNA(Tyr) + L-tyrosine + ATP = L-tyrosyl-tRNA(Tyr) + AMP + diphosphate + H(+). In terms of biological role, catalyzes the attachment of tyrosine to tRNA(Tyr) in a two-step reaction: tyrosine is first activated by ATP to form Tyr-AMP and then transferred to the acceptor end of tRNA(Tyr). This Trichormus variabilis (strain ATCC 29413 / PCC 7937) (Anabaena variabilis) protein is Tyrosine--tRNA ligase.